The chain runs to 351 residues: dTDP-glucose 4,6-dehydratase (351 aa).

Residues 12-13, 32-35, 58-59, 80-84, and threonine 99 each bind NAD(+); these read FI, DALT, DI, and FAAES. Serine 84 contributes to the substrate binding site. Threonine 133 is a binding site for substrate. The Proton donor role is filled by aspartate 134. Catalysis depends on proton acceptor residues glutamate 135 and tyrosine 158. Residue 158 to 162 coordinates NAD(+); sequence YSASK. Position 187 (asparagine 187) interacts with substrate. Asparagine 188 contacts NAD(+). Substrate is bound by residues 197-198, 213-215, arginine 222, asparagine 257, and 289-293; these read KL, PVY, and DRPGH.

This sequence belongs to the NAD(P)-dependent epimerase/dehydratase family. dTDP-glucose dehydratase subfamily. As to quaternary structure, homodimer. The cofactor is NAD(+).

The enzyme catalyses dTDP-alpha-D-glucose = dTDP-4-dehydro-6-deoxy-alpha-D-glucose + H2O. It functions in the pathway carbohydrate biosynthesis; dTDP-L-rhamnose biosynthesis. It participates in bacterial outer membrane biogenesis; LPS O-antigen biosynthesis. Its function is as follows. Catalyzes the dehydration of dTDP-D-glucose to form dTDP-6-deoxy-D-xylo-4-hexulose via a three-step process involving oxidation, dehydration and reduction. The sequence is that of dTDP-glucose 4,6-dehydratase (rfbB) from Xanthomonas campestris pv. campestris (strain ATCC 33913 / DSM 3586 / NCPPB 528 / LMG 568 / P 25).